Consider the following 2944-residue polypeptide: MRLRLLVAALCAAEILMGAPEVWAQPRDRVTCTRLYAADIVFLLDGSSSIGRSNFREVRGFLEGLVLPFSGAASAQGVRFATVQYSDDPQTEFGLDTLGSGSDTIRAIRELSYKGGNTRTGAALHHVSDRVFLPRLTRPGVPKVCILITDGKSQDLVDTAAQKLKGQGVKLFAVGIKNADPEELKRVASQPTSDFFFFVNDFSILRTLLPLISRRVCTTAGGVPVTLPSDDTPSGPRDLVLSEPSSQSLRVQWTAASGPVTGYKVQYTPLTGLGQPLPSERQEVNIPAGETSTRLQGLRPLTDYQVTVVALYANSIGEAVSGTARTTAKEGLELSLQNITSHSLLVAWRRVPGANGYRVTWRDLSGGPTQQQDLSPGQGSVFLDHLEPGTDYEVTVSALFGHSVGPAASLTARTASSVEQTLHPIILSPTSILLSWNLVPEARGYRLEWRRESGLETPQKVELPPDVTRHQLDGLQPGTEYRLTLYTLLEGREVATPATVVPTGLEQLVSPVMNLQAIELPGQRVRVSWNPVPGATEYRFTVRTTQGVERTLLLPGSQTTFDLDDVRAGLSYTVRVSARVGAQEGDASILTIHRDPEAPLVVPGLRVVASDATRIRVAWGLVPGASGFRISWRTGSGPESSRTLTPDSTVTDILGLQPSTSYQVAVSALRGREEGPPVVIVARTDPLGPVRRVHLTQAGSSSVSITWTGVPGATGYRVSWHSGHGPEKSLLVSGDATVAEIDGLEPDTEYIVRVRTHVAGVDGAPASVVVRTAPEPVGSVSKLQILNASSDVLRVTWVGVPGATSYKLAWGRSEGGPMKHRILPGNKESAEIRDLEGGVSYSVRVTALVGDREGAPVSIVITTPPATPALLETLQVVQSGEHSLRLRWEPVPGAPGFRLHWQPEGGQEQSLTLGPESNSYNLVGLEPATKYQVWLTVLGQTGEGPPRKVTAYTEPSHIPSTELRVVDTSIDSVTLTWTPVSGASSYILSWRPLRGTGQEVPRAPQTLPGTSSSHRVTGLEPGISYVFSLTPIQSGVRGSEISVTQTPACSHGPVDVVFLLHATRDNAHNAEAVRRVLERLVSALGPLGPQAAQVGLLTYSHRPSPLFPLNSSHDLGIILRKIRDIPYVDPSGNNLGTAVTTAHRYLLASNAPGRRQQVPGVMVLLVDEPLRGDILSPIREAQTSGLKVMALSLVGADPEQLRRLAPGTDPIQNFFAVDNGPGLDRAVSDLAVALCQAAVTIEPQTGPCAVHCPKGQKGEPGVTGLQGQAGPPGPPGLPGRTGAPGPQGPPGSTQAKGERGFPGPEGPPGSPGLPGVPGSPGIKGSTGRPGPRGEQGERGPQGPKGEPGEPGQITGGGGPGFPGKKGDPGPSGPPGSRGPVGDPGPRGPPGLPGISVKGDKGDRGERGPPGPGIGASEQGDPGLPGLPGSPGPQGPAGRPGEKGEKGDCEDGGPGLPGQPGPPGEPGLRGAPGMTGPKGDRGLTGTPGEPGVKGERGHPGPVGPQGLPGAAGHPGVEGPEGPPGPTGRRGEKGEPGRPGDPAVGPGGAGAKGEKGEAGLPGPRGASGSKGEQGAPGLALPGDPGPKGDPGDRGPIGLTGRAGPTGDSGPPGEKGEPGRPGSPGPVGPRGRDGEAGEKGDEGIPGEPGLPGKAGERGLRGAPGPRGPVGEKGDQGDPGEDGRNGSPGSSGPKGDRGEPGPPGPPGRLVDAGIESRDKGEPGQEGPRGPKGDPGPPGVSGERGIDGLRGPPGPQGDPGVRGPAGDKGDRGPPGLDGRSGLDGKPGAPGPPGLHGASGKAGDPGRDGLPGLRGEHGPPGPPGPPGVPGKAGDDGKPGLNGKNGDPGDPGEDGRKGEKGDSGAPGREGPDGPKGERGAPGNPGLQGPPGLPGQVGPPGQGFPGVPGITGPKGDRGETGSKGEQGLPGERGLRGEPGSLPNAERLLETAGIKVSALREIVDTWDESSGSFLPVPERRPGPKGDPGDRGPPGKEGLIGFPGERGLKGERGDPGPQGPPGLALGERGPPGPPGLAGEPGKPGIPGLPGRAGGSGEAGRPGERGERGEKGERGDQGRDGLPGLPGPPGPPGPKVAIEEPGPGLAREQGPPGLKGAKGEPGSDGDPGPKGDRGVPGIKGDVGEPGKRGHDGNPGLPGERGVAGPEGKPGLQGPRGTPGPVGSHGDPGPPGAPGLAGPAGPQGPSGLKGEPGETGPPGRGLPGPVGAVGLPGPPGPSGLVGPQGSPGLPGQVGETGKPGPPGRDGSSGKDGDRGSPGVPGSPGLPGPVGPKGEPGPVGAPGQVVVGPPGAKGEKGAPGDLAGALLGEPGAKGDRGLPGPRGEKGEAGRAGGPGDPGEDGQKGAPGLKGLKGEPGIGVQGPPGPSGPPGMKGDLGPPGAPGAPGVVGFPGQTGPRGETGQPGPVGERGLAGPPGREGAPGPLGPPGPPGSAGAPGASGLKGDKGDPGAGLPGPRGERGEPGVRGEDGHPGQEGPRGLVGPPGSRGEQGEKGAAGAAGLKGDKGDSAVIEGPPGPRGAKGDMGERGPRGIDGDKGPRGESGNPGDKGSKGEPGDKGSAGSIGVRGLTGPKGEPGAAGIPGEPGAPGKDGIPGFRGDKGDIGFMGPRGLKGEKGIKGTCGRDGERGDKGEAGFPGRPGLAGKKGDMGEPGLPGQSGAPGKEGLIGPKGDRGFDGQSGPKGDQGEKGERGPPGVGGFPGPRGNDGSSGPPGPPGGVGPKGPEGLQGQKGERGPPGESVVGAPGAPGTPGERGEQGRPGPAGPRGEKGEAALTEDDIRDFVRQEMSQHCACQGQFIASGSRPLPGYAADTAGSQLHHVPVLRVSHVEEEGQVPPEDDDDFSEYSVYSVEDYQEPEVPWDGEAEIKGWDQRGSDLCSLPLDEGSCTAYTLRWYHRAVPGGTACHPFVYGGCGGNANRFGTREACERRCPPQGVHSQKTGAA.

The first 24 residues, 1-24 (MRLRLLVAALCAAEILMGAPEVWA), serve as a signal peptide directing secretion. Residues 18–1254 (GAPEVWAQPR…TGPCAVHCPK (1237 aa)) are nonhelical region (NC1). Residues 39-212 (DIVFLLDGSS…SILRTLLPLI (174 aa)) enclose the VWFA 1 domain. Fibronectin type-III domains lie at 235–330 (GPRD…TAKE), 331–417 (GLEL…TASS), 418–508 (VEQT…LEQL), 511–598 (PVMN…DPEA), 601–688 (VVPG…DPLG), 689–776 (PVRR…APEP), 779–867 (SVSK…PPAT), 870–957 (LLET…EPSH), and 959–1053 (PSTE…SHGP). Asn-338 is a glycosylation site (N-linked (GlcNAc...) asparagine). N-linked (GlcNAc...) asparagine glycosylation occurs at Asn-787. One can recognise a VWFA 2 domain in the interval 1055-1230 (DVVFLLHATR…PGLDRAVSDL (176 aa)). Asn-1110 carries N-linked (GlcNAc...) asparagine glycosylation. The Cell attachment site motif lies at 1171–1173 (RGD). An interrupted collagenous region region spans residues 1255-1475 (GQKGEPGVTG…GLRGAPGMTG (221 aa)). A triple-helical region region spans residues 1255–2775 (GQKGEPGVTG…GPRGEKGEAA (1521 aa)). Disordered regions lie at residues 1259-1934 (EPGV…GSLP) and 1960-2773 (SSGS…EKGE). The segment covering 1338–1352 (RGPQGPKGEPGEPGQ) has biased composition (low complexity). Residues 1353 to 1363 (ITGGGGPGFPG) show a composition bias toward gly residues. Basic and acidic residues-rich tracts occupy residues 1397–1406 (KGDKGDRGER) and 1439–1448 (PGEKGEKGDC). Residues 1507-1518 (PGAAGHPGVEGP) show a composition bias toward low complexity. Basic and acidic residues-rich tracts occupy residues 1527–1536 (RRGEKGEPGR), 1627–1639 (RGRD…KGDE), and 1666–1680 (VGEK…EDGR). Pro residues predominate over residues 1813-1822 (PPGPPGPPGV). Basic and acidic residues-rich tracts occupy residues 1846–1855 (EDGRKGEKGD), 1862–1871 (EGPDGPKGER), and 1968–1984 (PERR…RGPP). Positions 2002–2004 (RGD) match the Cell attachment site motif. Residues 2040-2049 (GRAGGSGEAG) are compositionally biased toward gly residues. Over residues 2050-2068 (RPGERGERGEKGERGDQGR) the composition is skewed to basic and acidic residues. The short motif at 2063–2065 (RGD) is the Cell attachment site element. Residues 2074 to 2083 (LPGPPGPPGP) show a composition bias toward pro residues. A compositionally biased stretch (basic and acidic residues) spans 2130 to 2140 (DVGEPGKRGHD). A 4-hydroxyproline mark is found at Pro-2158, Pro-2167, Pro-2176, and Pro-2179. Low complexity-rich tracts occupy residues 2182-2197 (PGLA…SGLK), 2226-2241 (SGLV…PGQV), 2279-2299 (PKGE…PPGA), and 2306-2317 (PGDLAGALLGEP). The segment covering 2319–2335 (AKGDRGLPGPRGEKGEA) has biased composition (basic and acidic residues). A compositionally biased stretch (low complexity) spans 2414–2427 (ERGLAGPPGREGAP). 2 stretches are compositionally biased toward basic and acidic residues: residues 2462–2477 (RGER…DGHP) and 2525–2544 (AKGD…KGPR). Positions 2576-2594 (PKGEPGAAGIPGEPGAPGK) are enriched in low complexity. The Cell attachment site signature appears at 2601–2603 (RGD). Residues 2615–2636 (LKGEKGIKGTCGRDGERGDKGE) show a composition bias toward basic and acidic residues. 2 positions are modified to 5-hydroxylysine: Lys-2616 and Lys-2622. The short motif at 2631-2633 (RGD) is the Cell attachment site element. 4-hydroxyproline is present on residues Pro-2655, Pro-2658, and Pro-2664. Gly residues predominate over residues 2695–2704 (GPPGVGGFPG). Residues 2776–2944 (LTEDDIRDFV…GVHSQKTGAA (169 aa)) are nonhelical region (NC2). The 53-residue stretch at 2879–2931 (CSLPLDEGSCTAYTLRWYHRAVPGGTACHPFVYGGCGGNANRFGTREACERRC) folds into the BPTI/Kunitz inhibitor domain. 3 disulfides stabilise this stretch: Cys-2879/Cys-2931, Cys-2888/Cys-2914, and Cys-2906/Cys-2927.

In terms of assembly, homotrimer. Interacts with MIA3/TANGO1; facilitating its loading into transport carriers and subsequent secretion. In terms of processing, prolines at the third position of the tripeptide repeating unit (G-X-Y) are hydroxylated in some or all of the chains.

The protein resides in the secreted. It is found in the extracellular space. Its subcellular location is the extracellular matrix. The protein localises to the basement membrane. Functionally, stratified squamous epithelial basement membrane protein that forms anchoring fibrils which may contribute to epithelial basement membrane organization and adherence by interacting with extracellular matrix (ECM) proteins such as type IV collagen. This chain is Collagen alpha-1(VII) chain, found in Mus musculus (Mouse).